A 2753-amino-acid polypeptide reads, in one-letter code: Maltase-glucoamylase (2753 aa).

Topologically, residues 1–13 are cytoplasmic; sequence MARKKLKKFTTLE. Residues 14 to 34 traverse the membrane as a helical; Signal-anchor for type II membrane protein segment; it reads IVLSVLLLVLFIISIVLIVLL. Over 35–2753 the chain is Lumenal; the sequence is AKESLKSTAP…FTSLTWISTL (2719 aa). The interval 41-87 is disordered; it reads STAPDPGTTGTPDPGTTGTPDPGTTGTTHARTTGPPDPGTTGTTPVS. The span at 44–85 shows a compositional bias: low complexity; sequence PDPGTTGTPDPGTTGTPDPGTTGTTHARTTGPPDPGTTGTTP. One can recognise a P-type 1 domain in the interval 88-134; that stretch reads AECPVVNELERINCIPDQPPTKATCDQRGCCWNPQGAVSVPWCYYSK. Intrachain disulfides connect cysteine 90-cysteine 118, cysteine 101-cysteine 117, and cysteine 112-cysteine 130. N-linked (GlcNAc...) asparagine glycosylation is present at asparagine 135. Residue aspartate 289 participates in acarbose binding. A glycan (N-linked (GlcNAc...) asparagine) is linked at asparagine 295. Residues 356 to 737 are maltase; sequence PEQVVQEYLE…FRAHSRGDTV (382 aa). Aspartate 413 serves as a coordination point for acarbose. Sulfotyrosine occurs at positions 416 and 425. N-linked (GlcNAc...) asparagine glycosylation is found at asparagine 457, asparagine 458, and asparagine 479. Residue aspartate 529 is the Nucleophile of the active site. Glutamate 532 is an active-site residue. Residues arginine 612 and aspartate 628 each coordinate acarbose. An intrachain disulfide couples cysteine 659 to cysteine 670. Histidine 686 serves as a coordination point for acarbose. N-linked (GlcNAc...) asparagine glycosylation is found at asparagine 707, asparagine 749, asparagine 827, asparagine 885, asparagine 912, asparagine 977, asparagine 989, and asparagine 1255. The region spanning 954 to 1000 is the P-type 2 domain; the sequence is WSIKIRDEEKIDCYPDENGASAENCTARGCIWEASNSSGVPFCYFVN. Cystine bridges form between cysteine 966/cysteine 983 and cysteine 978/cysteine 996. The glucoamylase stretch occupies residues 1221–1632; the sequence is TPELVTQQYT…MQKAHTEGVT (412 aa). Sulfotyrosine is present on tyrosine 1282. N-linked (GlcNAc...) asparagine glycans are attached at residues asparagine 1323, asparagine 1364, and asparagine 1388. Aspartate 1420 serves as the catalytic Nucleophile. Glutamate 1423 is an active-site residue. The active-site Proton donor is aspartate 1526. Positions 1850-1896 constitute a P-type 3 domain; that stretch reads WSIKIRDEEKIDCYPDENGDSAENCTARGCIWEASNSSGVPFCYFVN. 2 cysteine pairs are disulfide-bonded: cysteine 1862–cysteine 1879 and cysteine 1874–cysteine 1892. N-linked (GlcNAc...) asparagine glycosylation is found at asparagine 2499, asparagine 2568, asparagine 2738, and asparagine 2743.

Belongs to the glycosyl hydrolase 31 family. In terms of assembly, monomer. In terms of processing, N- and O-glycosylated. Post-translationally, does not undergo intracellular or extracellular proteolytic cleavage. Sulfated. Broadly expressed. Highly expressed in small intestine. Expressed in granulocytes.

Its subcellular location is the apical cell membrane. The catalysed reaction is Hydrolysis of terminal, non-reducing (1-&gt;4)-linked alpha-D-glucose residues with release of alpha-D-glucose.. The enzyme catalyses D-maltoheptaose + H2O = D-maltohexaose + alpha-D-glucose. It catalyses the reaction D-maltohexaose + H2O = D-maltopentaose + alpha-D-glucose. It carries out the reaction D-maltopentaose + H2O = D-maltotetraose + alpha-D-glucose. The catalysed reaction is D-maltotetraose + H2O = D-maltotriose + alpha-D-glucose. The enzyme catalyses D-maltotriose + H2O = D-maltose + alpha-D-glucose. It catalyses the reaction D-maltose + H2O = alpha-D-glucose + D-glucose. It carries out the reaction nigerose + H2O = alpha-D-glucose + D-glucose. The catalysed reaction is kojibiose + H2O = alpha-D-glucose + D-glucose. The enzyme catalyses isomaltose + H2O = alpha-D-glucose + D-glucose. It catalyses the reaction 6-O-alpha-D-glucopyranosyl-D-fructose + H2O = alpha-D-glucose + D-fructose. It functions in the pathway carbohydrate degradation. Its activity is regulated as follows. Down-regulated at high oligomaltose concentration as it occurs during the mealtime. Down-regulated by anti-diabetic drug acarbose. Alpha-(1,4) exo-glucosidase involved in breakdown of dietary starch oligosaccharides in small intestine. Cleaves the non-reducing alpha-(1,4)-linked glucose residue in linear dextrins with retention of anomeric center stereochemistry. Mainly hydrolyzes short length oligomaltoses having two to seven glucose residues. Can cleave alpha-(1,2), alpha-(1,3) and alpha-(1,6) glycosidic linkages with lower efficiency, whereas beta glycosidic linkages are usually not hydrolyzed. The sequence is that of Maltase-glucoamylase from Homo sapiens (Human).